We begin with the raw amino-acid sequence, 379 residues long: Glutamate 5-kinase (379 aa).

K19 lines the ATP pocket. Positions 59, 146, and 158 each coordinate substrate. ATP-binding positions include 178-179 and 220-226; these read TD and TGGMATK. The 79-residue stretch at 285-363 folds into the PUA domain; sequence SGDIIIDDGA…KDIISILGHD (79 aa).

This sequence belongs to the glutamate 5-kinase family.

It localises to the cytoplasm. The catalysed reaction is L-glutamate + ATP = L-glutamyl 5-phosphate + ADP. It participates in amino-acid biosynthesis; L-proline biosynthesis; L-glutamate 5-semialdehyde from L-glutamate: step 1/2. Functionally, catalyzes the transfer of a phosphate group to glutamate to form L-glutamate 5-phosphate. The protein is Glutamate 5-kinase of Vibrio campbellii (strain ATCC BAA-1116).